Consider the following 639-residue polypeptide: Elongation factor 4 (639 aa).

In terms of domain architecture, tr-type G spans 39 to 220; sequence AQIRNFCIIA…EVVRLVPPPT (182 aa). Residues 51–56 and 167–170 contribute to the GTP site; these read DHGKST and NKID.

Belongs to the TRAFAC class translation factor GTPase superfamily. Classic translation factor GTPase family. LepA subfamily.

It is found in the cell membrane. It carries out the reaction GTP + H2O = GDP + phosphate + H(+). Required for accurate and efficient protein synthesis under certain stress conditions. May act as a fidelity factor of the translation reaction, by catalyzing a one-codon backward translocation of tRNAs on improperly translocated ribosomes. Back-translocation proceeds from a post-translocation (POST) complex to a pre-translocation (PRE) complex, thus giving elongation factor G a second chance to translocate the tRNAs correctly. Binds to ribosomes in a GTP-dependent manner. This Mycobacterium sp. (strain JLS) protein is Elongation factor 4.